The sequence spans 310 residues: GPN-loop GTPase 2 (310 aa).

Ala2 carries the N-acetylalanine modification. GTP is bound at residue 19-24 (GSGKTT). The short motif at 76 to 78 (GPN) is the Gly-Pro-Asn (GPN)-loop; involved in dimer interface element. Residue 178–181 (SKMD) participates in GTP binding.

The protein belongs to the GPN-loop GTPase family. As to quaternary structure, heterodimers with GPN1 or GPN3. Binds to RNA polymerase II (RNAPII).

Small GTPase required for proper localization of RNA polymerase II and III (RNAPII and RNAPIII). May act at an RNAP assembly step prior to nuclear import. This Homo sapiens (Human) protein is GPN-loop GTPase 2.